An 86-amino-acid polypeptide reads, in one-letter code: Large ribosomal subunit protein uL23 (86 aa).

The protein belongs to the universal ribosomal protein uL23 family. Part of the 50S ribosomal subunit. Contacts protein L29.

In terms of biological role, binds to 23S rRNA. One of the proteins that surrounds the polypeptide exit tunnel on the outside of the ribosome. This is Large ribosomal subunit protein uL23 from Methanococcus maripaludis (strain C5 / ATCC BAA-1333).